A 20-amino-acid chain; its full sequence is Protein PR-L5 (20 aa).

The protein belongs to the BetVI family.

This is Protein PR-L5 from Lupinus luteus (European yellow lupine).